Here is a 135-residue protein sequence, read N- to C-terminus: Galectin-1 (135 aa).

A2 carries the N-acetylalanine modification. Positions 4 to 135 constitute a Galectin domain; that stretch reads GLVASNLNLK…DFKIKCVAFE (132 aa). Residues K13, K19, and K29 each carry the N6-acetyllysine modification. Position 30 is a phosphoserine (S30). A beta-D-galactoside is bound by residues 45-49, H53, N62, and 69-72; these read HFNPR and WGTE. At K108 the chain carries N6-acetyllysine; alternate. K108 is subject to N6-succinyllysine; alternate. K128 is subject to N6-acetyllysine.

Homodimer. Binds LGALS3BP. Interacts with CD2, CD3, CD4, CD6, CD7, CD43, ALCAM and CD45. Interacts with laminin (via poly-N-acetyllactosamine). Interacts with SUSD2. Interacts with cargo receptor TMED10; the interaction mediates the translocation from the cytoplasm into the ERGIC (endoplasmic reticulum-Golgi intermediate compartment) and thereby secretion. Interacts with CD69.

Its subcellular location is the secreted. It is found in the extracellular space. The protein localises to the extracellular matrix. The protein resides in the cytoplasm. Its function is as follows. Lectin that binds beta-galactoside and a wide array of complex carbohydrates. Plays a role in regulating apoptosis, cell proliferation and cell differentiation. Inhibits CD45 protein phosphatase activity and therefore the dephosphorylation of Lyn kinase. Strong inducer of T-cell apoptosis. Plays a negative role in Th17 cell differentiation via activation of the receptor CD69. The sequence is that of Galectin-1 (Lgals1) from Rattus norvegicus (Rat).